Here is a 412-residue protein sequence, read N- to C-terminus: Pyruvate dehydrogenase E1 component subunit alpha, mitochondrial (412 aa).

His104, Tyr130, Arg131, Ala169, Gly177, Val179, Asp208, Gly209, Ala210, Asn237, and Tyr239 together coordinate pyruvate. Thiamine diphosphate contacts are provided by Tyr130 and Arg131. 6 residues coordinate thiamine diphosphate: Gly177, Val179, Asp208, Gly209, Ala210, and Asn237. Residue Asp208 participates in Mg(2+) binding. Residues Asn237 and Tyr239 each contribute to the Mg(2+) site. Thiamine diphosphate is bound at residue His304.

In terms of assembly, tetramer of 2 alpha and 2 beta subunits. Thiamine diphosphate is required as a cofactor. Requires Mg(2+) as cofactor.

Its subcellular location is the mitochondrion matrix. The catalysed reaction is N(6)-[(R)-lipoyl]-L-lysyl-[protein] + pyruvate + H(+) = N(6)-[(R)-S(8)-acetyldihydrolipoyl]-L-lysyl-[protein] + CO2. Its activity is regulated as follows. E1 activity is regulated by phosphorylation (inactivation) and dephosphorylation (activation) of the alpha subunit. The pyruvate dehydrogenase complex catalyzes the overall conversion of pyruvate to acetyl-CoA and CO(2). It contains multiple copies of three enzymatic components: pyruvate dehydrogenase (E1), dihydrolipoamide acetyltransferase (E2) and lipoamide dehydrogenase (E3). The chain is Pyruvate dehydrogenase E1 component subunit alpha, mitochondrial (PDA1) from Kluyveromyces lactis (strain ATCC 8585 / CBS 2359 / DSM 70799 / NBRC 1267 / NRRL Y-1140 / WM37) (Yeast).